The primary structure comprises 507 residues: ATP synthase subunit alpha, mitochondrial (507 aa).

171 to 178 (GDRQTGKT) is a binding site for ATP.

It belongs to the ATPase alpha/beta chains family. As to quaternary structure, F-type ATPases have 2 components, CF(1) - the catalytic core - and CF(0) - the membrane proton channel. CF(1) has five subunits: alpha(3), beta(3), gamma(1), delta(1), epsilon(1). CF(0) has three main subunits: a, b and c.

The protein localises to the mitochondrion. Its subcellular location is the mitochondrion inner membrane. In terms of biological role, mitochondrial membrane ATP synthase (F(1)F(0) ATP synthase or Complex V) produces ATP from ADP in the presence of a proton gradient across the membrane which is generated by electron transport complexes of the respiratory chain. F-type ATPases consist of two structural domains, F(1) - containing the extramembraneous catalytic core, and F(0) - containing the membrane proton channel, linked together by a central stalk and a peripheral stalk. During catalysis, ATP synthesis in the catalytic domain of F(1) is coupled via a rotary mechanism of the central stalk subunits to proton translocation. Subunits alpha and beta form the catalytic core in F(1). Rotation of the central stalk against the surrounding alpha(3)beta(3) subunits leads to hydrolysis of ATP in three separate catalytic sites on the beta subunits. Subunit alpha does not bear the catalytic high-affinity ATP-binding sites. This chain is ATP synthase subunit alpha, mitochondrial (ATPA), found in Raphanus sativus (Radish).